A 69-amino-acid chain; its full sequence is Putative membrane protein insertion efficiency factor (69 aa).

This sequence belongs to the UPF0161 family.

Its subcellular location is the cell membrane. Could be involved in insertion of integral membrane proteins into the membrane. The chain is Putative membrane protein insertion efficiency factor from Alkaliphilus oremlandii (strain OhILAs) (Clostridium oremlandii (strain OhILAs)).